Here is a 198-residue protein sequence, read N- to C-terminus: Single-stranded DNA cytosine deaminase (198 aa).

The short motif at 1–30 is the Bipartite nuclear localization signal element; sequence MDSLLMKQKKFLYHFKNVRWAKGRHETYLC. The tract at residues 2 to 26 is interaction with SUPT6H; it reads DSLLMKQKKFLYHFKNVRWAKGRHE. In terms of domain architecture, CMP/dCMP-type deaminase spans 23-129; it reads GRHETYLCYV…KAEPEGLRRL (107 aa). Thr27 carries the phosphothreonine; by PKA modification. Ser38 is modified (phosphoserine; by PKA). The important for interaction with CTNNBL1 stretch occupies residues 39–42; the sequence is ATSC. His56 lines the Zn(2+) pocket. Glu58 acts as the Proton donor in catalysis. Cys87 and Cys90 together coordinate Zn(2+). The segment at 88 to 116 is required for interaction with RNF126; the sequence is YDCARHVAEFLRWNPNLSLRIFTARLYFC. The Nuclear export signal motif lies at 183-198; it reads LYEVDDLRDAFRMLGF.

The protein belongs to the cytidine and deoxycytidylate deaminase family. As to quaternary structure, interacts with CTNNBL1; the interaction is important for the immunoglobulin switch activity of AICDA. Interacts (via its NLS) with KPNA1. Interacts with PKA/PRKACA and PRKAR1A/PKR1. Interacts with SUPT6H, TRIM28 and NCL. Directly interacts with MCM3AP/GANP; this interaction may favor AICDA recruitment to immunoglobulin variable region genes, hence promoting somatic hypermutations. Zn(2+) is required as a cofactor. Post-translationally, ser-38 is the major site whereas Thr-27 is the minor site of phosphorylation. Phosphorylation regulates its class-switch recombination activity. Probably monoubiquitinated on several residues by RNF126. In terms of tissue distribution, expressed in germinal center B-cells (at protein level).

It is found in the nucleus. Its subcellular location is the cytoplasm. The catalysed reaction is a 2'-deoxycytidine in single-stranded DNA + H2O + H(+) = a 2'-deoxyuridine in single-stranded DNA + NH4(+). In terms of biological role, single-stranded DNA-specific cytidine deaminase. Involved in somatic hypermutation (SHM), gene conversion, and class-switch recombination (CSR) in B-lymphocytes by deaminating C to U during transcription of Ig-variable (V) and Ig-switch (S) region DNA. Required for several crucial steps of B-cell terminal differentiation necessary for efficient antibody responses. May also play a role in the epigenetic regulation of gene expression by participating in DNA demethylation. This is Single-stranded DNA cytosine deaminase (Aicda) from Mus musculus (Mouse).